The primary structure comprises 392 residues: Chaperone protein DnaJ (392 aa).

Residues 5–75 (DYYEVLGIDK…QKKQQYDQFG (71 aa)) enclose the J domain. A CR-type zinc finger spans residues 148–229 (GVEKTIKYKR…CHGTGTAKET (82 aa)). Residues Cys-161, Cys-164, Cys-177, Cys-180, Cys-203, Cys-206, Cys-217, and Cys-220 each contribute to the Zn(2+) site. 4 CXXCXGXG motif repeats span residues 161 to 168 (CENCHGTG), 177 to 184 (CPTCNGQG), 203 to 210 (CPDCHGTG), and 217 to 224 (CKHCHGTG).

It belongs to the DnaJ family. As to quaternary structure, homodimer. Zn(2+) is required as a cofactor.

It is found in the cytoplasm. Its function is as follows. Participates actively in the response to hyperosmotic and heat shock by preventing the aggregation of stress-denatured proteins and by disaggregating proteins, also in an autonomous, DnaK-independent fashion. Unfolded proteins bind initially to DnaJ; upon interaction with the DnaJ-bound protein, DnaK hydrolyzes its bound ATP, resulting in the formation of a stable complex. GrpE releases ADP from DnaK; ATP binding to DnaK triggers the release of the substrate protein, thus completing the reaction cycle. Several rounds of ATP-dependent interactions between DnaJ, DnaK and GrpE are required for fully efficient folding. Also involved, together with DnaK and GrpE, in the DNA replication of plasmids through activation of initiation proteins. The chain is Chaperone protein DnaJ from Fusobacterium nucleatum subsp. nucleatum (strain ATCC 25586 / DSM 15643 / BCRC 10681 / CIP 101130 / JCM 8532 / KCTC 2640 / LMG 13131 / VPI 4355).